The sequence spans 521 residues: Bifunctional purine biosynthesis protein PurH (521 aa).

Residues 1–145 form the MGS-like domain; it reads MIKQALISVS…KNHRDVTVIV (145 aa).

This sequence belongs to the PurH family.

The catalysed reaction is (6R)-10-formyltetrahydrofolate + 5-amino-1-(5-phospho-beta-D-ribosyl)imidazole-4-carboxamide = 5-formamido-1-(5-phospho-D-ribosyl)imidazole-4-carboxamide + (6S)-5,6,7,8-tetrahydrofolate. The enzyme catalyses IMP + H2O = 5-formamido-1-(5-phospho-D-ribosyl)imidazole-4-carboxamide. Its pathway is purine metabolism; IMP biosynthesis via de novo pathway; 5-formamido-1-(5-phospho-D-ribosyl)imidazole-4-carboxamide from 5-amino-1-(5-phospho-D-ribosyl)imidazole-4-carboxamide (10-formyl THF route): step 1/1. It functions in the pathway purine metabolism; IMP biosynthesis via de novo pathway; IMP from 5-formamido-1-(5-phospho-D-ribosyl)imidazole-4-carboxamide: step 1/1. In Burkholderia multivorans (strain ATCC 17616 / 249), this protein is Bifunctional purine biosynthesis protein PurH.